Here is a 956-residue protein sequence, read N- to C-terminus: DNA ligase 4 (956 aa).

Residues glutamate 307, lysine 309, isoleucine 310, arginine 314, glutamate 371, phenylalanine 409, glutamate 476, lysine 481, lysine 498, and lysine 500 each coordinate ATP. The active-site N6-AMP-lysine intermediate is lysine 309. Glutamate 371 contacts Mg(2+). Glutamate 476 contacts Mg(2+). The disordered stretch occupies residues 666 to 700; the sequence is LEDRKRRNAGPGRGAKRLKLANVSSDEDELGTDER. BRCT domains are found at residues 700–793 and 857–956; these read RPTS…PRNL and PKGM…DYPL.

The protein belongs to the ATP-dependent DNA ligase family. The cofactor is Mg(2+).

It localises to the nucleus. It carries out the reaction ATP + (deoxyribonucleotide)n-3'-hydroxyl + 5'-phospho-(deoxyribonucleotide)m = (deoxyribonucleotide)n+m + AMP + diphosphate.. DNA ligase involved in DNA non-homologous end joining (NHEJ); required for double-strand break (DSB) repair. In Yarrowia lipolytica (strain CLIB 122 / E 150) (Yeast), this protein is DNA ligase 4 (LIG4).